The chain runs to 322 residues: Acetylglutamate kinase (322 aa).

Substrate-binding positions include 85 to 86 (GG), arginine 107, and asparagine 211.

Belongs to the acetylglutamate kinase family. ArgB subfamily.

It localises to the cytoplasm. It carries out the reaction N-acetyl-L-glutamate + ATP = N-acetyl-L-glutamyl 5-phosphate + ADP. The protein operates within amino-acid biosynthesis; L-arginine biosynthesis; N(2)-acetyl-L-ornithine from L-glutamate: step 2/4. Functionally, catalyzes the ATP-dependent phosphorylation of N-acetyl-L-glutamate. The chain is Acetylglutamate kinase from Methanosarcina barkeri (strain Fusaro / DSM 804).